The primary structure comprises 395 residues: Elongation factor Tu (395 aa).

One can recognise a tr-type G domain in the interval 10-205 (KVHMNVGTIG…TMDEYFKDPV (196 aa)). Residues 19–26 (GHVDHGKT) are G1. GTP is bound at residue 19–26 (GHVDHGKT). Thr-26 contributes to the Mg(2+) binding site. Residues 60 to 64 (GITIN) form a G2 region. The segment at 81–84 (DCPG) is G3. GTP is bound by residues 81–85 (DCPGH) and 136–139 (NKVD). The tract at residues 136–139 (NKVD) is G4. A G5 region spans residues 173-175 (SAF).

This sequence belongs to the TRAFAC class translation factor GTPase superfamily. Classic translation factor GTPase family. EF-Tu/EF-1A subfamily. Monomer.

Its subcellular location is the cytoplasm. The catalysed reaction is GTP + H2O = GDP + phosphate + H(+). GTP hydrolase that promotes the GTP-dependent binding of aminoacyl-tRNA to the A-site of ribosomes during protein biosynthesis. This chain is Elongation factor Tu, found in Treponema denticola (strain ATCC 35405 / DSM 14222 / CIP 103919 / JCM 8153 / KCTC 15104).